The chain runs to 1384 residues: DNA-directed RNA polymerase subunit beta' (1384 aa).

Zn(2+)-binding residues include Cys81, Cys83, Cys96, and Cys99. Positions 472, 474, and 476 each coordinate Mg(2+).

This sequence belongs to the RNA polymerase beta' chain family. The RNAP catalytic core consists of 2 alpha, 1 beta, 1 beta' and 1 omega subunit. When a sigma factor is associated with the core the holoenzyme is formed, which can initiate transcription. Mg(2+) serves as cofactor. Zn(2+) is required as a cofactor.

It carries out the reaction RNA(n) + a ribonucleoside 5'-triphosphate = RNA(n+1) + diphosphate. In terms of biological role, DNA-dependent RNA polymerase catalyzes the transcription of DNA into RNA using the four ribonucleoside triphosphates as substrates. The sequence is that of DNA-directed RNA polymerase subunit beta' from Opitutus terrae (strain DSM 11246 / JCM 15787 / PB90-1).